The primary structure comprises 93 residues: Beta-defensin 128 (93 aa).

The N-terminal stretch at 1–18 (MKLFLVLIILLFEVLTDG) is a signal peptide. 3 cysteine pairs are disulfide-bonded: cysteine 24/cysteine 52, cysteine 32/cysteine 46, and cysteine 36/cysteine 53.

Belongs to the beta-defensin family.

Its subcellular location is the secreted. Functionally, has antibacterial activity. The chain is Beta-defensin 128 (DEFB128) from Pongo pygmaeus (Bornean orangutan).